The primary structure comprises 1227 residues: DNA-directed RNA polymerase subunit beta (1227 aa).

It belongs to the RNA polymerase beta chain family. As to quaternary structure, the RNAP catalytic core consists of 2 alpha, 1 beta, 1 beta' and 1 omega subunit. When a sigma factor is associated with the core the holoenzyme is formed, which can initiate transcription.

It carries out the reaction RNA(n) + a ribonucleoside 5'-triphosphate = RNA(n+1) + diphosphate. Functionally, DNA-dependent RNA polymerase catalyzes the transcription of DNA into RNA using the four ribonucleoside triphosphates as substrates. The sequence is that of DNA-directed RNA polymerase subunit beta from Chloroflexus aggregans (strain MD-66 / DSM 9485).